The sequence spans 120 residues: MVLQQYGIIAVFLVGGAATAVAALATNWLLRPKKPPEGDKLAAYECGLKTQGPTWIQFKVSYFLYALVFLLFDVETVFLYPWAVRFQALGLFAFAEMIVFIGILVLGLWYAWKEGALKWL.

3 helical membrane-spanning segments follow: residues 6-26 (YGII…ALAT), 63-83 (FLYA…YPWA), and 89-109 (LGLF…LGLW).

This sequence belongs to the complex I subunit 3 family. As to quaternary structure, NDH-1 is composed of 14 different subunits. Subunits NuoA, H, J, K, L, M, N constitute the membrane sector of the complex.

Its subcellular location is the cell membrane. It catalyses the reaction a quinone + NADH + 5 H(+)(in) = a quinol + NAD(+) + 4 H(+)(out). Functionally, NDH-1 shuttles electrons from NADH, via FMN and iron-sulfur (Fe-S) centers, to quinones in the respiratory chain. The immediate electron acceptor for the enzyme in this species is believed to be a menaquinone. Couples the redox reaction to proton translocation (for every two electrons transferred, four hydrogen ions are translocated across the cytoplasmic membrane), and thus conserves the redox energy in a proton gradient. The protein is NADH-quinone oxidoreductase subunit A of Moorella thermoacetica (strain ATCC 39073 / JCM 9320).